A 634-amino-acid polypeptide reads, in one-letter code: ABC transporter B family member 29, chloroplastic (634 aa).

The transit peptide at 1–51 (MSFLLLTPPPCLLIPPPPLSHRRSSSLFLKHPFQPSPRPLSFCKPSALRLR) directs the protein to the chloroplast. 6 consecutive transmembrane segments (helical) span residues 75–95 (TVLL…QIVP), 119–139 (LVLA…QAFL), 195–215 (LLNT…HMIV), 219–239 (ALTL…AYLG), 307–327 (IVQV…VILA), and 330–350 (SLSS…IDPV). Residues 77–362 (LLGWLCSCVS…LGKAYNELKQ (286 aa)) enclose the ABC transmembrane type-1 domain. The ABC transporter domain occupies 396–633 (VELCDISFKY…KDSLTSAGLV (238 aa)). 430–437 (GPSGGGKT) serves as a coordination point for ATP.

The protein belongs to the ABC transporter superfamily. ABCB family. Multidrug resistance exporter (TC 3.A.1.201) subfamily.

Its subcellular location is the plastid. It localises to the chloroplast membrane. The chain is ABC transporter B family member 29, chloroplastic (ABCB29) from Arabidopsis thaliana (Mouse-ear cress).